The following is a 472-amino-acid chain: Methanethiol oxidase (472 aa).

Ala-2 is subject to N-acetylalanine. Phosphoserine occurs at positions 111, 371, and 467.

Belongs to the selenium-binding protein family. In terms of assembly, interacts with USP33. In terms of processing, phosphorylated. The N-terminus is blocked. As to expression, widely expressed. Highly expressed in liver, lung, colon, prostate, kidney and pancreas. In brain, present both in neurons and glia (at protein level). Down-regulated in lung adenocarcinoma, colorectal carcinoma and ovarian cancer. Two-fold up-regulated in brain and blood from schizophrenia patients.

The protein localises to the nucleus. It is found in the cytoplasm. It localises to the cytosol. Its subcellular location is the membrane. It catalyses the reaction methanethiol + O2 + H2O = hydrogen sulfide + formaldehyde + H2O2 + H(+). It participates in organosulfur degradation. Catalyzes the oxidation of methanethiol, an organosulfur compound known to be produced in substantial amounts by gut bacteria. Selenium-binding protein which may be involved in the sensing of reactive xenobiotics in the cytoplasm. May be involved in intra-Golgi protein transport. This is Methanethiol oxidase (SELENBP1) from Homo sapiens (Human).